A 566-amino-acid chain; its full sequence is O-fucosyltransferase 36 (566 aa).

A compositionally biased stretch (basic and acidic residues) spans M1–H14. Residues M1–I37 are disordered. The chain crosses the membrane as a helical; Signal-anchor for type II membrane protein span at residues Y66–P86. Residues N93, N129, N138, N179, and N190 are each glycosylated (N-linked (GlcNAc...) asparagine). Residues H415–R417 and T531–F532 each bind substrate.

The protein belongs to the glycosyltransferase GT106 family.

It is found in the membrane. Its pathway is glycan metabolism. In Arabidopsis thaliana (Mouse-ear cress), this protein is O-fucosyltransferase 36.